Here is a 242-residue protein sequence, read N- to C-terminus: UDP-2,3-diacylglucosamine hydrolase (242 aa).

5 residues coordinate Mn(2+): D9, H11, D42, N79, and H114. 79–80 (NR) is a substrate binding site. Substrate contacts are provided by D122, S160, N164, K167, and H195. Mn(2+)-binding residues include H195 and H197.

The protein belongs to the LpxH family. Requires Mn(2+) as cofactor.

Its subcellular location is the cell inner membrane. It carries out the reaction UDP-2-N,3-O-bis[(3R)-3-hydroxytetradecanoyl]-alpha-D-glucosamine + H2O = 2-N,3-O-bis[(3R)-3-hydroxytetradecanoyl]-alpha-D-glucosaminyl 1-phosphate + UMP + 2 H(+). Its pathway is glycolipid biosynthesis; lipid IV(A) biosynthesis; lipid IV(A) from (3R)-3-hydroxytetradecanoyl-[acyl-carrier-protein] and UDP-N-acetyl-alpha-D-glucosamine: step 4/6. In terms of biological role, hydrolyzes the pyrophosphate bond of UDP-2,3-diacylglucosamine to yield 2,3-diacylglucosamine 1-phosphate (lipid X) and UMP by catalyzing the attack of water at the alpha-P atom. Involved in the biosynthesis of lipid A, a phosphorylated glycolipid that anchors the lipopolysaccharide to the outer membrane of the cell. This chain is UDP-2,3-diacylglucosamine hydrolase, found in Shewanella loihica (strain ATCC BAA-1088 / PV-4).